The primary structure comprises 38 residues: Cytochrome b6-f complex subunit 5 (38 aa).

A helical membrane pass occupies residues 5 to 25 (LVLGIVLGLIPITLAGLFVAA).

Belongs to the PetG family. As to quaternary structure, the 4 large subunits of the cytochrome b6-f complex are cytochrome b6, subunit IV (17 kDa polypeptide, PetD), cytochrome f and the Rieske protein, while the 4 small subunits are PetG, PetL, PetM and PetN. The complex functions as a dimer.

The protein localises to the cellular thylakoid membrane. Component of the cytochrome b6-f complex, which mediates electron transfer between photosystem II (PSII) and photosystem I (PSI), cyclic electron flow around PSI, and state transitions. PetG is required for either the stability or assembly of the cytochrome b6-f complex. The protein is Cytochrome b6-f complex subunit 5 of Microcystis aeruginosa (strain NIES-843 / IAM M-2473).